A 171-amino-acid chain; its full sequence is Flavodoxin (171 aa).

The Flavodoxin-like domain maps to 4-165; that stretch reads IGIFFGSDTG…RIKQWVKQII (162 aa).

It belongs to the flavodoxin family. FMN is required as a cofactor.

Functionally, low-potential electron donor to a number of redox enzymes. The chain is Flavodoxin (fldA) from Buchnera aphidicola subsp. Acyrthosiphon pisum (strain APS) (Acyrthosiphon pisum symbiotic bacterium).